Here is a 501-residue protein sequence, read N- to C-terminus: Geissoschizine oxidase (501 aa).

Residues 1 to 21 (MEFSFSSPALYIVYFLLFFVV) traverse the membrane as a helical segment. A glycan (N-linked (GlcNAc...) asparagine) is linked at Asn-60. Cys-442 contacts heme.

The protein belongs to the cytochrome P450 family. Heme is required as a cofactor. As to expression, expressed in leaf epidermis. Also present in the leaf internal phloem-associated parenchyma (IPAP) inside the mesophyll.

The protein resides in the membrane. It catalyses the reaction (19E)-geissoschizine + reduced [NADPH--hemoprotein reductase] + O2 = akuammicine + formate + oxidized [NADPH--hemoprotein reductase] + H2O + H(+). The enzyme catalyses (19E)-geissoschizine + reduced [NADPH--hemoprotein reductase] + O2 = 3,17-didehydrostemmadenine + oxidized [NADPH--hemoprotein reductase] + 2 H2O. It functions in the pathway alkaloid biosynthesis. Component of the seco-iridoid and derivatives monoterpenoid indole alkaloids (MIAs, e.g. vincristine, quinine, and strychnine) biosynthesis pathway. Catalyzes the oxidation of 19E-geissoschizine to produce a short-lived MIA unstable intermediate which can be spontaneously converted into akuammicine or oxidized by Redox1 and Redox2 to produce stemmadenine and 16S/R-deshydroxymethylstemmadenine (16S/R-DHS). This is Geissoschizine oxidase from Catharanthus roseus (Madagascar periwinkle).